Reading from the N-terminus, the 392-residue chain is Selenide, water dikinase 1 (392 aa).

Cys-31 is an active-site residue. ATP is bound by residues Lys-32, 67–69, Asp-87, Asp-110, and 161–164; these read GMD and GGQT. Asp-69 lines the Mg(2+) pocket. Residue Asp-110 participates in Mg(2+) binding. Asp-265 is a binding site for Mg(2+).

The protein belongs to the selenophosphate synthase 1 family. Class II subfamily. As to quaternary structure, homodimer. It depends on Mg(2+) as a cofactor.

It is found in the cell membrane. Its subcellular location is the nucleus membrane. It carries out the reaction hydrogenselenide + ATP + H2O = selenophosphate + AMP + phosphate + 2 H(+). Functionally, synthesizes selenophosphate from selenide and ATP. In Xenopus tropicalis (Western clawed frog), this protein is Selenide, water dikinase 1 (sephs1).